Reading from the N-terminus, the 400-residue chain is Cell division protein FtsZ 2 (400 aa).

The segment covering 1-16 (MQDIVREAMERDEAER) has biased composition (basic and acidic residues). Positions 1-30 (MQDIVREAMERDEAERQTQSSLEDSDDQFG) are disordered. Residues 41-45 (GAGNN), 128-130 (GTG), Glu-159, Arg-162, and Asp-205 each bind GTP. The segment at 338–400 (VLGPSTQKQA…EKNNGLDVIR (63 aa)) is disordered. Residues 352–364 (QSIQSRESQQQHS) show a composition bias toward low complexity. Polar residues predominate over residues 365–382 (GSEFDSSERAQTAQSGTW). The segment covering 385–400 (GGRDEVEKNNGLDVIR) has biased composition (basic and acidic residues).

This sequence belongs to the FtsZ family. Homodimer. Polymerizes to form a dynamic ring structure in a strictly GTP-dependent manner. Interacts directly with several other division proteins. Interacts with SepF.

It localises to the cytoplasm. Functionally, essential cell division protein that forms a contractile ring structure (Z ring) at the future cell division site. The regulation of the ring assembly controls the timing and the location of cell division. One of the functions of the FtsZ ring is to recruit other cell division proteins to the septum to produce a new cell wall between the dividing cells. Binds GTP and shows GTPase activity. Required for division ring constriction. This chain is Cell division protein FtsZ 2, found in Haloferax volcanii (strain ATCC 29605 / DSM 3757 / JCM 8879 / NBRC 14742 / NCIMB 2012 / VKM B-1768 / DS2) (Halobacterium volcanii).